An 86-amino-acid polypeptide reads, in one-letter code: Small ribosomal subunit protein bS20 (86 aa).

This sequence belongs to the bacterial ribosomal protein bS20 family.

In terms of biological role, binds directly to 16S ribosomal RNA. The protein is Small ribosomal subunit protein bS20 of Rhodococcus erythropolis (strain PR4 / NBRC 100887).